The following is a 311-amino-acid chain: DNA-directed RNA polymerase subunit alpha (311 aa).

Positions M1–T226 are alpha N-terminal domain (alpha-NTD). An alpha C-terminal domain (alpha-CTD) region spans residues D243 to K311.

It belongs to the RNA polymerase alpha chain family. In terms of assembly, homodimer. The RNAP catalytic core consists of 2 alpha, 1 beta, 1 beta' and 1 omega subunit. When a sigma factor is associated with the core the holoenzyme is formed, which can initiate transcription.

It carries out the reaction RNA(n) + a ribonucleoside 5'-triphosphate = RNA(n+1) + diphosphate. Its function is as follows. DNA-dependent RNA polymerase catalyzes the transcription of DNA into RNA using the four ribonucleoside triphosphates as substrates. This Streptococcus pneumoniae serotype 4 (strain ATCC BAA-334 / TIGR4) protein is DNA-directed RNA polymerase subunit alpha.